The chain runs to 332 residues: Transcription factor HBP-1b(c38) (332 aa).

The tract at residues 1-48 (MAEASPRTETSTDDTDENLMLEPGNAALAVVSDSSDRSRDKNGDQKTM) is disordered. The span at 34–47 (SSDRSRDKNGDQKT) shows a compositional bias: basic and acidic residues. A bZIP domain is found at 44 to 107 (DQKTMRRLAQ…SSADQSHSMS (64 aa)). The tract at residues 46–66 (KTMRRLAQNREAARKSRLRKK) is basic motif. Residues 47-142 (TMRRLAQNRE…RAAVNAHAGD (96 aa)) adopt a coiled-coil conformation. Residues 72–86 (LENSRLKLTQLEQEL) are leucine-zipper. The DOG1 domain maps to 111–329 (ALAFDTEYAR…RALSSLWLAR (219 aa)).

The protein belongs to the bZIP family. As to quaternary structure, binds DNA as a dimer.

The protein resides in the nucleus. Functionally, transcriptional activator that binds specifically to the DNA sequence 5'-TGACG-3'. Recognizes ocs elements like the as-1 motif of the cauliflower mosaic virus 35S promoter. Binding to the as-1-like cis elements mediate auxin- and salicylic acid-inducible transcription. Binds to the hexamer motif 5'-ACGTCA-3' of histone gene promoters. The chain is Transcription factor HBP-1b(c38) from Triticum aestivum (Wheat).